The primary structure comprises 312 residues: Heme oxygenase 2 (312 aa).

Ser-2 is modified (N-acetylserine). Position 2 is a phosphoserine (Ser-2). Position 41 (His-41) interacts with heme b. HRM repeat units follow at residues 260–265 and 277–282; these read KCPYYA and SCPFRA. 2 positions are modified to S-nitrosocysteine: Cys-261 and Cys-278.

Belongs to the heme oxygenase family. In terms of processing, S-nitrosylated by BLVRB.

It is found in the microsome. It localises to the endoplasmic reticulum. The enzyme catalyses heme b + 3 reduced [NADPH--hemoprotein reductase] + 3 O2 = biliverdin IXalpha + CO + Fe(2+) + 3 oxidized [NADPH--hemoprotein reductase] + 3 H2O + H(+). Heme oxygenase cleaves the heme ring at the alpha methene bridge to form biliverdin. Biliverdin is subsequently converted to bilirubin by biliverdin reductase. Under physiological conditions, the activity of heme oxygenase is highest in the spleen, where senescent erythrocytes are sequestrated and destroyed. Heme oxygenase 2 could be implicated in the production of carbon monoxide in brain where it could act as a neurotransmitter. In Oryctolagus cuniculus (Rabbit), this protein is Heme oxygenase 2 (HMOX2).